Here is a 502-residue protein sequence, read N- to C-terminus: Maturase K (502 aa).

Belongs to the intron maturase 2 family. MatK subfamily.

The protein resides in the plastid. The protein localises to the chloroplast. In terms of biological role, usually encoded in the trnK tRNA gene intron. Probably assists in splicing its own and other chloroplast group II introns. The sequence is that of Maturase K from Vaccinium vitis-idaea (Mountain cranberry).